Consider the following 107-residue polypeptide: uncharacterized protein (107 aa).

It is found in the mitochondrion. This is an uncharacterized protein from Arabidopsis thaliana (Mouse-ear cress).